The following is a 379-amino-acid chain: Carbamoyl phosphate synthase small chain (379 aa).

Residues 1-189 (MSKSALLVLE…GLPEAKDDSE (189 aa)) form a CPSase region. Serine 47, glycine 241, and glycine 243 together coordinate L-glutamine. The 187-residue stretch at 193 to 379 (HVVAYDFGAK…FIELIKQHSA (187 aa)) folds into the Glutamine amidotransferase type-1 domain. Cysteine 269 acts as the Nucleophile in catalysis. L-glutamine contacts are provided by leucine 270, glutamine 273, asparagine 311, glycine 313, and phenylalanine 314. Active-site residues include histidine 353 and glutamate 355.

The protein belongs to the CarA family. Composed of two chains; the small (or glutamine) chain promotes the hydrolysis of glutamine to ammonia, which is used by the large (or ammonia) chain to synthesize carbamoyl phosphate. Tetramer of heterodimers (alpha,beta)4.

The catalysed reaction is hydrogencarbonate + L-glutamine + 2 ATP + H2O = carbamoyl phosphate + L-glutamate + 2 ADP + phosphate + 2 H(+). The enzyme catalyses L-glutamine + H2O = L-glutamate + NH4(+). It functions in the pathway amino-acid biosynthesis; L-arginine biosynthesis; carbamoyl phosphate from bicarbonate: step 1/1. The protein operates within pyrimidine metabolism; UMP biosynthesis via de novo pathway; (S)-dihydroorotate from bicarbonate: step 1/3. Its function is as follows. Small subunit of the glutamine-dependent carbamoyl phosphate synthetase (CPSase). CPSase catalyzes the formation of carbamoyl phosphate from the ammonia moiety of glutamine, carbonate, and phosphate donated by ATP, constituting the first step of 2 biosynthetic pathways, one leading to arginine and/or urea and the other to pyrimidine nucleotides. The small subunit (glutamine amidotransferase) binds and cleaves glutamine to supply the large subunit with the substrate ammonia. This chain is Carbamoyl phosphate synthase small chain, found in Vibrio vulnificus (strain YJ016).